A 416-amino-acid chain; its full sequence is Serine hydroxymethyltransferase 1 (416 aa).

(6S)-5,6,7,8-tetrahydrofolate contacts are provided by residues L121 and G125–L127. K229 is subject to N6-(pyridoxal phosphate)lysine. (6S)-5,6,7,8-tetrahydrofolate is bound by residues E245 and S354 to F356.

The protein belongs to the SHMT family. As to quaternary structure, homodimer. Pyridoxal 5'-phosphate serves as cofactor.

The protein resides in the cytoplasm. It carries out the reaction (6R)-5,10-methylene-5,6,7,8-tetrahydrofolate + glycine + H2O = (6S)-5,6,7,8-tetrahydrofolate + L-serine. It functions in the pathway one-carbon metabolism; tetrahydrofolate interconversion. The protein operates within amino-acid biosynthesis; glycine biosynthesis; glycine from L-serine: step 1/1. Catalyzes the reversible interconversion of serine and glycine with tetrahydrofolate (THF) serving as the one-carbon carrier. This reaction serves as the major source of one-carbon groups required for the biosynthesis of purines, thymidylate, methionine, and other important biomolecules. Also exhibits THF-independent aldolase activity toward beta-hydroxyamino acids, producing glycine and aldehydes, via a retro-aldol mechanism. The polypeptide is Serine hydroxymethyltransferase 1 (Photobacterium profundum (strain SS9)).